The chain runs to 347 residues: Probable inactive UDP-arabinopyranose mutase 2 (347 aa).

N-linked (Glc...) arginine glycosylation is present at R145.

This sequence belongs to the RGP family. In terms of assembly, heteromers with UAM1 and UAM3. In terms of processing, is not reversibly glycosylated in vitro by UDP-glucose, UDP-xylose and UDP-galactose.

The protein localises to the golgi apparatus. Probable inactive UDP-L-arabinose mutase. Inactive in vitro, but associates with UAM1 and UAM3. In Oryza sativa subsp. japonica (Rice), this protein is Probable inactive UDP-arabinopyranose mutase 2.